An 862-amino-acid polypeptide reads, in one-letter code: Protein translocase subunit SecA (862 aa).

ATP contacts are provided by residues glutamine 88, 106-110, and aspartate 506; that span reads GEGKT. Zn(2+)-binding residues include cysteine 839, cysteine 841, cysteine 850, and histidine 851.

The protein belongs to the SecA family. In terms of assembly, monomer and homodimer. Part of the essential Sec protein translocation apparatus which comprises SecA, SecYEG and auxiliary proteins SecDF-YajC and YidC. Requires Zn(2+) as cofactor.

It localises to the cell inner membrane. Its subcellular location is the cytoplasm. The enzyme catalyses ATP + H2O + cellular proteinSide 1 = ADP + phosphate + cellular proteinSide 2.. Its function is as follows. Part of the Sec protein translocase complex. Interacts with the SecYEG preprotein conducting channel. Has a central role in coupling the hydrolysis of ATP to the transfer of proteins into and across the cell membrane, serving as an ATP-driven molecular motor driving the stepwise translocation of polypeptide chains across the membrane. In Campylobacter jejuni subsp. doylei (strain ATCC BAA-1458 / RM4099 / 269.97), this protein is Protein translocase subunit SecA.